The chain runs to 472 residues: 2-oxoglutarate carboxylase small subunit (472 aa).

Positions 1–445 (MFKKVLVANR…TTRYLEEHPH (445 aa)) constitute a Biotin carboxylation domain. 2 residues coordinate ATP: lysine 115 and glutamate 199. The ATP-grasp domain maps to 119–316 (KEVMKRAGVP…IVKWQIRIAA (198 aa)). Arginine 291 is an active-site residue.

As to quaternary structure, heterohexadecamer of 8 large subunits and 8 small subunits. Requires Mg(2+) as cofactor. It depends on Mn(2+) as a cofactor. The cofactor is Co(2+).

It catalyses the reaction hydrogencarbonate + 2-oxoglutarate + ATP = (S)-oxalosuccinate + ADP + phosphate + H(+). The sequence is that of 2-oxoglutarate carboxylase small subunit from Hydrogenobacter thermophilus (strain DSM 6534 / IAM 12695 / TK-6).